The sequence spans 593 residues: DNA primase (593 aa).

Residues 40-64 (CPFHHEKTPSFTVSQKKQFYHCFGC) form a CHC2-type zinc finger. Residues 260–342 (KQLLVVEGYM…GRQLKFIFLP (83 aa)) enclose the Toprim domain. Mg(2+) contacts are provided by glutamate 266, aspartate 310, and aspartate 312.

The protein belongs to the DnaG primase family. As to quaternary structure, monomer. Interacts with DnaB. Requires Zn(2+) as cofactor. Mg(2+) serves as cofactor.

The catalysed reaction is ssDNA + n NTP = ssDNA/pppN(pN)n-1 hybrid + (n-1) diphosphate.. Its function is as follows. RNA polymerase that catalyzes the synthesis of short RNA molecules used as primers for DNA polymerase during DNA replication. This chain is DNA primase, found in Haemophilus influenzae (strain ATCC 51907 / DSM 11121 / KW20 / Rd).